A 314-amino-acid polypeptide reads, in one-letter code: uncharacterized protein (314 aa).

The next 10 membrane-spanning stretches (helical) occupy residues 4–23 (FFIGDLLPIIVIMLLGYFSG), 36–53 (FNKLVLNYALPAALFVSI), 68–90 (TLVSLVVIVGCFFFSWFGCYKFF), 97–116 (AAVCALIAGSPTIGFLGFAV), 131–153 (VAIISIIVNAITIPIGLYLLNPS), 174–196 (PVVWAPVLATILVLVGVKIPAAW), 200–222 (FNLIAKANSGVAVFAAGLTLAAH), 229–251 (EIAYNTFLKLILMPLALLLVGMA), 261–283 (MMVLAGALPPAFSGIIIASRFNV), and 290–309 (ASLAVSVLGFVVTAPLWIYV).

It belongs to the auxin efflux carrier (TC 2.A.69) family.

The protein resides in the cell membrane. This is an uncharacterized protein from Escherichia coli O157:H7.